The sequence spans 386 residues: Antilisterial bacteriocin subtilosin biosynthesis protein AlbE (386 aa).

In terms of biological role, involved in the production of the bacteriocin subtilosin. The polypeptide is Antilisterial bacteriocin subtilosin biosynthesis protein AlbE (albE) (Bacillus subtilis (strain 168)).